A 128-amino-acid chain; its full sequence is NADH-quinone oxidoreductase subunit A (128 aa).

Helical transmembrane passes span 9–29, 68–88, and 96–116; these read FPIA…LALA, LLFI…VLLL, and LGWA…AGLV.

Belongs to the complex I subunit 3 family. In terms of assembly, NDH-1 is composed of 14 different subunits. Subunits NuoA, H, J, K, L, M, N constitute the membrane sector of the complex.

Its subcellular location is the cell inner membrane. It catalyses the reaction a quinone + NADH + 5 H(+)(in) = a quinol + NAD(+) + 4 H(+)(out). NDH-1 shuttles electrons from NADH, via FMN and iron-sulfur (Fe-S) centers, to quinones in the respiratory chain. The immediate electron acceptor for the enzyme in this species is believed to be ubiquinone. Couples the redox reaction to proton translocation (for every two electrons transferred, four hydrogen ions are translocated across the cytoplasmic membrane), and thus conserves the redox energy in a proton gradient. In Anaeromyxobacter sp. (strain Fw109-5), this protein is NADH-quinone oxidoreductase subunit A.